We begin with the raw amino-acid sequence, 279 residues long: uncharacterized protein (279 aa).

The Reverse transcriptase domain maps to 1-87 (MRVNGRNLTN…DEYIYLGRQI (87 aa)).

This is an uncharacterized protein from Caenorhabditis elegans.